Here is a 357-residue protein sequence, read N- to C-terminus: RNA-binding protein 4B (357 aa).

RRM domains follow at residues 2–72 (VKLF…ASKN) and 78–148 (TKLH…LSTS). A CCHC-type zinc finger spans residues 160–177 (SGCYRCGKEGHWSKECPV). The interval 196–357 (AVRTPYTMGY…YVDRTRYSAF (162 aa)) is interaction with TNPO3.

Interacts with TNPO3, which may mediate nuclear import of the protein. As to expression, expressed in the suprachiasmatic nucleus (SCN) (at protein level). Expressed in the suprachiasmatic nucleus (SCN).

It localises to the nucleus. Its subcellular location is the nucleolus. Functionally, required for the translational activation of PER1 mRNA in response to circadian clock. Binds directly to the 3'-UTR of the PER1 mRNA. This chain is RNA-binding protein 4B (Rbm4b), found in Mus musculus (Mouse).